The sequence spans 388 residues: Proteasomal ubiquitin receptor ADRM1 homolog rpn1302 (388 aa).

The region spanning 15–132 (RGKYGLVSVK…SLINQLIADP (118 aa)) is the Pru domain. Disordered stretches follow at residues 202–227 (RASS…EEAT) and 368–388 (SDGE…EKDE). Residues 368–377 (SDGEVEEEGD) show a composition bias toward acidic residues. Over residues 378–388 (VEMRESNEKDE) the composition is skewed to basic and acidic residues.

Belongs to the ADRM1 family. Component of the 19S proteasome regulatory particle complex. The 2 S.pombe rpn13 homologs, rpn1301 and rpn1302 are present at a 0.2-1 ratio.

The protein resides in the cytoplasm. Its subcellular location is the nucleus. Functionally, component of the 26S proteasome, a multiprotein complex involved in the ATP-dependent degradation of ubiquitinated proteins. This complex plays a key role in the maintenance of protein homeostasis by removing misfolded or damaged proteins, which could impair cellular functions, and by removing proteins whose functions are no longer required. Therefore, the proteasome participates in numerous cellular processes, including cell cycle progression, apoptosis, or DNA damage repair. Within the complex, functions as a proteasomal ubiquitin receptor. This Schizosaccharomyces pombe (strain 972 / ATCC 24843) (Fission yeast) protein is Proteasomal ubiquitin receptor ADRM1 homolog rpn1302 (rpn1302).